We begin with the raw amino-acid sequence, 489 residues long: Mitochondrial-processing peptidase subunit beta (489 aa).

The N-terminal 43 residues, 1–43 (MAAAAARVVLSSAARRRLWGFSESLLIRGAAGRSLYFGENRLR), are a transit peptide targeting the mitochondrion. Residue histidine 101 participates in Zn(2+) binding. Glutamate 104 acts as the Proton acceptor in catalysis. The Zn(2+) site is built by histidine 105 and glutamate 181.

Belongs to the peptidase M16 family. In terms of assembly, heterodimer of PMPCA (alpha) and PMPCB (beta) subunits, forming the mitochondrial processing protease (MPP) in which PMPCA is involved in substrate recognition and binding and PMPCB is the catalytic subunit. Zn(2+) is required as a cofactor.

Its subcellular location is the mitochondrion matrix. The catalysed reaction is Release of N-terminal transit peptides from precursor proteins imported into the mitochondrion, typically with Arg in position P2.. Its activity is regulated as follows. Binding to PMPCA is required for catalytic activity. Its function is as follows. Catalytic subunit of the essential mitochondrial processing protease (MPP), which cleaves the mitochondrial sequence off newly imported precursors proteins. Preferentially, cleaves after an arginine at position P2. Required for PINK1 turnover by coupling PINK1 mitochondrial import and cleavage, which results in subsequent PINK1 proteolysis. The polypeptide is Mitochondrial-processing peptidase subunit beta (PMPCB) (Homo sapiens (Human)).